The chain runs to 494 residues: Transcriptional regulator calD (494 aa).

It is found in the nucleus. Functionally, transcription co-regulator that might be involved in the regulation of the expression of the gene cluster that mediates the biosynthesis of calbistrins and related compounds such as decumbenones. Calbistrin A is a secondary metabolite with an interesting structure that was recently found to have bioactivity against leukemia cells. It consists of two polyketides linked by an ester bond: a bicyclic decalin containing polyketide and a linear 12 carbon dioic acid structure. In Penicillium decumbens, this protein is Transcriptional regulator calD.